The following is a 229-amino-acid chain: Deoxyribose-phosphate aldolase (229 aa).

Aspartate 96 acts as the Proton donor/acceptor in catalysis. Lysine 166 acts as the Schiff-base intermediate with acetaldehyde in catalysis. Lysine 195 serves as the catalytic Proton donor/acceptor.

Belongs to the DeoC/FbaB aldolase family. DeoC type 1 subfamily.

The protein localises to the cytoplasm. The catalysed reaction is 2-deoxy-D-ribose 5-phosphate = D-glyceraldehyde 3-phosphate + acetaldehyde. The protein operates within carbohydrate degradation; 2-deoxy-D-ribose 1-phosphate degradation; D-glyceraldehyde 3-phosphate and acetaldehyde from 2-deoxy-alpha-D-ribose 1-phosphate: step 2/2. Functionally, catalyzes a reversible aldol reaction between acetaldehyde and D-glyceraldehyde 3-phosphate to generate 2-deoxy-D-ribose 5-phosphate. In Micrococcus luteus (strain ATCC 4698 / DSM 20030 / JCM 1464 / CCM 169 / CCUG 5858 / IAM 1056 / NBRC 3333 / NCIMB 9278 / NCTC 2665 / VKM Ac-2230) (Micrococcus lysodeikticus), this protein is Deoxyribose-phosphate aldolase.